A 612-amino-acid polypeptide reads, in one-letter code: Glutamine--fructose-6-phosphate aminotransferase [isomerizing] (612 aa).

The active-site Nucleophile; for GATase activity is the Cys-2. One can recognise a Glutamine amidotransferase type-2 domain in the interval 2–217; it reads CGIVGGVAER…EGDIARLTRD (216 aa). SIS domains are found at residues 283 to 428 and 461 to 602; these read AEAD…VKEQ and LSEL…VDQP. Lys-607 serves as the catalytic For Fru-6P isomerization activity.

As to quaternary structure, homodimer.

The protein localises to the cytoplasm. The enzyme catalyses D-fructose 6-phosphate + L-glutamine = D-glucosamine 6-phosphate + L-glutamate. In terms of biological role, catalyzes the first step in hexosamine metabolism, converting fructose-6P into glucosamine-6P using glutamine as a nitrogen source. The chain is Glutamine--fructose-6-phosphate aminotransferase [isomerizing] from Acinetobacter baylyi (strain ATCC 33305 / BD413 / ADP1).